The primary structure comprises 78 residues: Acyl carrier protein (78 aa).

The Carrier domain maps to 2–77; the sequence is STIEERVKKI…AAIDFINANQ (76 aa). S37 bears the O-(pantetheine 4'-phosphoryl)serine mark.

It belongs to the acyl carrier protein (ACP) family. Post-translationally, 4'-phosphopantetheine is transferred from CoA to a specific serine of apo-ACP by AcpS. This modification is essential for activity because fatty acids are bound in thioester linkage to the sulfhydryl of the prosthetic group.

The protein resides in the cytoplasm. It functions in the pathway lipid metabolism; fatty acid biosynthesis. Carrier of the growing fatty acid chain in fatty acid biosynthesis. This is Acyl carrier protein from Yersinia pseudotuberculosis serotype O:1b (strain IP 31758).